The sequence spans 460 residues: Argininosuccinate lyase (460 aa).

It belongs to the lyase 1 family. Argininosuccinate lyase subfamily.

Its subcellular location is the cytoplasm. It catalyses the reaction 2-(N(omega)-L-arginino)succinate = fumarate + L-arginine. It functions in the pathway amino-acid biosynthesis; L-arginine biosynthesis; L-arginine from L-ornithine and carbamoyl phosphate: step 3/3. The polypeptide is Argininosuccinate lyase (Buchnera aphidicola subsp. Cinara cedri (strain Cc)).